The primary structure comprises 439 residues: Serine hydroxymethyltransferase (439 aa).

Residues leucine 119 and glycine 123 to leucine 125 each bind (6S)-5,6,7,8-tetrahydrofolate. Lysine 228 carries the N6-(pyridoxal phosphate)lysine modification. Residue serine 370–phenylalanine 372 coordinates (6S)-5,6,7,8-tetrahydrofolate.

The protein belongs to the SHMT family. Homodimer. Pyridoxal 5'-phosphate serves as cofactor.

It is found in the cytoplasm. The catalysed reaction is (6R)-5,10-methylene-5,6,7,8-tetrahydrofolate + glycine + H2O = (6S)-5,6,7,8-tetrahydrofolate + L-serine. It participates in one-carbon metabolism; tetrahydrofolate interconversion. It functions in the pathway amino-acid biosynthesis; glycine biosynthesis; glycine from L-serine: step 1/1. In terms of biological role, catalyzes the reversible interconversion of serine and glycine with tetrahydrofolate (THF) serving as the one-carbon carrier. This reaction serves as the major source of one-carbon groups required for the biosynthesis of purines, thymidylate, methionine, and other important biomolecules. Also exhibits THF-independent aldolase activity toward beta-hydroxyamino acids, producing glycine and aldehydes, via a retro-aldol mechanism. The sequence is that of Serine hydroxymethyltransferase from Chlorobium phaeobacteroides (strain BS1).